Reading from the N-terminus, the 411-residue chain is Tubulin beta-2 chain (411 aa).

Positions 37, 106, 110, 111, 112, 172, and 194 each coordinate GTP. Glu-37 serves as a coordination point for Mg(2+). The disordered stretch occupies residues 392–411 (QYQDATAEPEGXYEEDYDEA). The segment covering 402–411 (GXYEEDYDEA) has biased composition (acidic residues).

This sequence belongs to the tubulin family. In terms of assembly, dimer of alpha and beta chains. A typical microtubule is a hollow water-filled tube with an outer diameter of 25 nm and an inner diameter of 15 nM. Alpha-beta heterodimers associate head-to-tail to form protofilaments running lengthwise along the microtubule wall with the beta-tubulin subunit facing the microtubule plus end conferring a structural polarity. Microtubules usually have 13 protofilaments but different protofilament numbers can be found in some organisms and specialized cells. Mg(2+) is required as a cofactor.

It localises to the cytoplasm. It is found in the cytoskeleton. Its function is as follows. Tubulin is the major constituent of microtubules, a cylinder consisting of laterally associated linear protofilaments composed of alpha- and beta-tubulin heterodimers. Microtubules grow by the addition of GTP-tubulin dimers to the microtubule end, where a stabilizing cap forms. Below the cap, tubulin dimers are in GDP-bound state, owing to GTPase activity of alpha-tubulin. The protein is Tubulin beta-2 chain (TUBB2) of Anemia phyllitidis (Fern).